The following is a 431-amino-acid chain: Xaa-Arg dipeptidase (431 aa).

This sequence belongs to the peptidase M20A family.

It carries out the reaction beta-alanyl-L-lysine + H2O = beta-alanine + L-lysine. It catalyses the reaction beta-alanyl-L-arginine + H2O = beta-alanine + L-arginine. The catalysed reaction is beta-alanyl-L-ornithine + H2O = beta-alanine + L-ornithine. The enzyme catalyses N(2)-(4-aminobutanoyl)-L-lysine + H2O = 4-aminobutanoate + L-lysine. It carries out the reaction N(2)-(4-aminobutanoyl)-L-arginine + H2O = 4-aminobutanoate + L-arginine. It catalyses the reaction N(2)-(4-aminobutanoyl)-L-ornithine + H2O = 4-aminobutanoate + L-ornithine. In terms of biological role, catalyzes the peptide bond hydrolysis in dipeptides having basic amino acids lysine, ornithine or arginine at C-terminus. Postulated to function in a metabolite repair mechanism by eliminating alternate dipeptide by-products formed during carnosine synthesis. This Mus musculus (Mouse) protein is Xaa-Arg dipeptidase.